Here is a 353-residue protein sequence, read N- to C-terminus: Phosphate acyltransferase (353 aa).

The protein belongs to the PlsX family. Homodimer. Probably interacts with PlsY.

The protein localises to the cytoplasm. It catalyses the reaction a fatty acyl-[ACP] + phosphate = an acyl phosphate + holo-[ACP]. Its pathway is lipid metabolism; phospholipid metabolism. Its function is as follows. Catalyzes the reversible formation of acyl-phosphate (acyl-PO(4)) from acyl-[acyl-carrier-protein] (acyl-ACP). This enzyme utilizes acyl-ACP as fatty acyl donor, but not acyl-CoA. This Afipia carboxidovorans (strain ATCC 49405 / DSM 1227 / KCTC 32145 / OM5) (Oligotropha carboxidovorans) protein is Phosphate acyltransferase.